A 1380-amino-acid polypeptide reads, in one-letter code: Carboxypeptidase D (1380 aa).

The first 31 residues, 1 to 31 (MASGRDERPPWRLGRLLLLMCLLLLGSSARA), serve as a signal peptide directing secretion. The Extracellular portion of the chain corresponds to 32 to 1299 (AHIKKAEATT…DNRIFGLPRE (1268 aa)). The 324-residue stretch at 57–380 (RYYHEEELES…ESLITLIEKV (324 aa)) folds into the Peptidase M14 1 domain. Positions 139 and 142 each coordinate Zn(2+). Residues 162–164 (RGD) carry the Cell attachment site motif. The N-linked (GlcNAc...) asparagine glycan is linked to Asn-172. The tract at residues 190–232 (AREGDCGFGDGGPSGASGRDNSRGRDLNRSFPDQFSTGEPPAL) is disordered. The span at 195-204 (CGFGDGGPSG) shows a compositional bias: gly residues. Asn-217 carries N-linked (GlcNAc...) asparagine glycosylation. His-257 provides a ligand contact to Zn(2+). Tyr-265 bears the Phosphotyrosine mark. Ser-270 carries the phosphoserine modification. Glu-350 serves as the catalytic Proton donor/acceptor. 4 N-linked (GlcNAc...) asparagine glycosylation sites follow: Asn-399, Asn-410, Asn-429, and Asn-522. The region spanning 502 to 792 (HHHHFPDMEI…RSLIQFMKQV (291 aa)) is the Peptidase M14 2 domain. Zn(2+) contacts are provided by His-564 and Glu-567. N-linked (GlcNAc...) asparagine glycosylation is present at Asn-626. His-671 provides a ligand contact to Zn(2+). Glu-762 functions as the Proton donor/acceptor in the catalytic mechanism. Residues Asn-811, Asn-855, Asn-867, and Asn-879 are each glycosylated (N-linked (GlcNAc...) asparagine). The tract at residues 874–899 (STDSNNESKKGKGASSSTNDASDPTT) is disordered. The segment covering 887–897 (ASSSTNDASDP) has biased composition (polar residues). A Peptidase M14 3 domain is found at 932–1211 (RYHSYKDLSE…RSLLSMLVEV (280 aa)). Residues Asn-955, Asn-978, Asn-1070, and Asn-1142 are each glycosylated (N-linked (GlcNAc...) asparagine). A helical membrane pass occupies residues 1300 to 1320 (LVVTVSGATMSALILTACIIW). S-palmitoyl cysteine attachment occurs at residues Cys-1317, Cys-1321, and Cys-1323. Residues 1321 to 1380 (CICSIKSNRHKDGFHRLRQHHDEYEDEIRMMSTGSKKSLLSHEFQDETDTEEETLYSSKH) are Cytoplasmic-facing. Residues Ser-1358 and Ser-1361 each carry the phosphoserine modification. The tract at residues 1359 to 1380 (LLSHEFQDETDTEEETLYSSKH) is disordered. Phosphothreonine occurs at positions 1368 and 1370.

It belongs to the peptidase M14 family. Zn(2+) serves as cofactor. Highly expressed in placenta, pancreas and hepatoma cells. Lower levels found in skeletal muscle, heart and colon carcinoma and melanoma cell lines.

It is found in the cell membrane. It carries out the reaction Releases C-terminal Arg and Lys from polypeptides.. The protein is Carboxypeptidase D (CPD) of Homo sapiens (Human).